The sequence spans 221 residues: Probable septum site-determining protein MinC (221 aa).

This sequence belongs to the MinC family. Interacts with MinD and FtsZ.

Its function is as follows. Cell division inhibitor that blocks the formation of polar Z ring septums. Rapidly oscillates between the poles of the cell to destabilize FtsZ filaments that have formed before they mature into polar Z rings. Prevents FtsZ polymerization. The chain is Probable septum site-determining protein MinC from Aliivibrio salmonicida (strain LFI1238) (Vibrio salmonicida (strain LFI1238)).